Reading from the N-terminus, the 309-residue chain is Olfactory receptor 10V1 (309 aa).

Topologically, residues 1 to 25 are extracellular; sequence MEGINKTAKMQFFFRPFSPDPEVQM. N5 carries an N-linked (GlcNAc...) asparagine glycan. Residues 26-46 form a helical membrane-spanning segment; that stretch reads LIFVVFLMMYLTSLGGNATIA. At 47-54 the chain is on the cytoplasmic side; sequence VIVQINHS. The chain crosses the membrane as a helical span at residues 55-75; that stretch reads LHTPMYFFLANLAVLEIFYTS. At 76 to 100 the chain is on the extracellular side; sequence SITPLALANLLSMGKTPVSITGCGT. Residues C98 and C190 are joined by a disulfide bond. A helical transmembrane segment spans residues 101–121; it reads QMFFFVFLGGADCVLLVVMAY. Topologically, residues 122 to 140 are cytoplasmic; that stretch reads DQFIAICHPLRYRLIMSWS. Residues 141-161 traverse the membrane as a helical segment; the sequence is LCVELLVGSLVLGFLLSLPLT. Over 162-198 the chain is Extracellular; the sequence is ILIFHLPFCHNDEIYHFYCDMPAVMRLACADTRVHKT. The helical transmembrane segment at 199–218 threads the bilayer; the sequence is ALYIISFIVLSIPLSLISIS. At 219 to 238 the chain is on the cytoplasmic side; the sequence is YVFIVVAILRIRSAEGRQQA. The helical transmembrane segment at 239–259 threads the bilayer; sequence YSTCSSHILVVLLQYGCTSFI. The Extracellular portion of the chain corresponds to 260-272; the sequence is YLSPSSSYSPEMG. A helical membrane pass occupies residues 273–293; it reads RVVSVAYTFITPILNPLIYSL. The Cytoplasmic segment spans residues 294-309; that stretch reads RNKELKDALRKALRKF.

It belongs to the G-protein coupled receptor 1 family.

The protein resides in the cell membrane. In terms of biological role, odorant receptor. This chain is Olfactory receptor 10V1 (OR10V1), found in Homo sapiens (Human).